The chain runs to 408 residues: Alkane 1-monooxygenase (408 aa).

The next 4 membrane-spanning stretches (helical) occupy residues 30-50, 58-78, 102-122, and 126-146; these read LWMI…GYQF, IFAL…DTII, LVKS…YLVS, and TSFI…GIAV. Residues His-150, His-154, His-180, His-184, and His-185 each contribute to the Fe cation site. The helical transmembrane segment at 254 to 274 threads the bilayer; it reads IIAIFGKGTIPYLVTQAFYGI. Fe cation contacts are provided by His-324, His-327, and His-328.

It belongs to the fatty acid desaturase type 1 family. AlkB subfamily. It depends on Fe(3+) as a cofactor.

The protein localises to the cell inner membrane. The catalysed reaction is octane + 2 reduced [rubredoxin] + O2 + 2 H(+) = 2 oxidized [rubredoxin] + octan-1-ol + H2O. It participates in hydrocarbon metabolism; alkane degradation. Its function is as follows. Catalyzes the hydroxylation of n-alkanes in the presence of a NADH-rubredoxin reductase and rubredoxin. It preferably hydroxylases long-chain-length alkanes with at least 12 carbon atoms. The chain is Alkane 1-monooxygenase (alkB) from Acinetobacter baylyi (strain ATCC 33305 / BD413 / ADP1).